Consider the following 195-residue polypeptide: Glycerol-3-phosphate acyltransferase (195 aa).

Helical transmembrane passes span 2–22 (LWIF…GLFI), 52–72 (YGVA…LMAY), 78–98 (WIFI…SIFM), 112–132 (VFLA…LAVI), and 145–165 (FAVA…VPLA).

Belongs to the PlsY family. In terms of assembly, probably interacts with PlsX.

It is found in the cell inner membrane. It catalyses the reaction an acyl phosphate + sn-glycerol 3-phosphate = a 1-acyl-sn-glycero-3-phosphate + phosphate. The protein operates within lipid metabolism; phospholipid metabolism. Functionally, catalyzes the transfer of an acyl group from acyl-phosphate (acyl-PO(4)) to glycerol-3-phosphate (G3P) to form lysophosphatidic acid (LPA). This enzyme utilizes acyl-phosphate as fatty acyl donor, but not acyl-CoA or acyl-ACP. This Maridesulfovibrio salexigens (strain ATCC 14822 / DSM 2638 / NCIMB 8403 / VKM B-1763) (Desulfovibrio salexigens) protein is Glycerol-3-phosphate acyltransferase.